Here is a 67-residue protein sequence, read N- to C-terminus: DNA-directed RNA polymerase subunit omega (67 aa).

The protein belongs to the RNA polymerase subunit omega family. In terms of assembly, the RNAP catalytic core consists of 2 alpha, 1 beta, 1 beta' and 1 omega subunit. When a sigma factor is associated with the core the holoenzyme is formed, which can initiate transcription.

The catalysed reaction is RNA(n) + a ribonucleoside 5'-triphosphate = RNA(n+1) + diphosphate. In terms of biological role, promotes RNA polymerase assembly. Latches the N- and C-terminal regions of the beta' subunit thereby facilitating its interaction with the beta and alpha subunits. The chain is DNA-directed RNA polymerase subunit omega from Variovorax paradoxus (strain S110).